The sequence spans 351 residues: Mediator of RNA polymerase II transcription subunit 18 (351 aa).

Residues 153 to 231 are disordered; the sequence is GNGDPIDIDT…LPQSLSNGVS (79 aa). The span at 163–204 shows a compositional bias: basic and acidic residues; that stretch reads NNDKQGDNNTDKPKQEHDGKLPEAIDEDIIKNGDEKKTTHDD. Residues 205–216 are compositionally biased toward acidic residues; it reads NDSDIMEIDEPN. The span at 217-231 shows a compositional bias: polar residues; the sequence is PETQTLPQSLSNGVS.

The protein belongs to the Mediator complex subunit 18 family. Component of the Mediator complex.

The protein resides in the nucleus. Component of the Mediator complex, a coactivator involved in the regulated transcription of nearly all RNA polymerase II-dependent genes. Mediator functions as a bridge to convey information from gene-specific regulatory proteins to the basal RNA polymerase II transcription machinery. Mediator is recruited to promoters by direct interactions with regulatory proteins and serves as a scaffold for the assembly of a functional preinitiation complex with RNA polymerase II and the general transcription factors. This Candida albicans (strain SC5314 / ATCC MYA-2876) (Yeast) protein is Mediator of RNA polymerase II transcription subunit 18 (SRB5).